Here is a 358-residue protein sequence, read N- to C-terminus: MYDRLQAVEDRYDELNELLSDPDVVSDPKRLRDLSKEQSGITATVETYREYKNVNEQINETKELLGEKLDDEMREMAKEEFAELQKEKTDLEERLKLLLVPKDPNDDKNVILEIRGAAGGDEAALFAGDLFRMYSKYAESRGWKVEIMDANPTGIGGYKEIIAMMNGNDAFSRMKYENGAHRVQRVPETESGGRIHTSTATVAILPEAEEVEIELHDKDIRTDTFASTGAGGQSVNTTMSAVRLTHIPTGIVVSMQDERSQLKNKDKAMKVLRARVYDKFEREAREEYDANRKSAVGTGDRSERIRTYNYPQNRVTDHRIGLTIQKLDQIMEGKLDEIIDALILEDQTSKLEHLNDAN.

Residue Gln-233 is modified to N5-methylglutamine.

The protein belongs to the prokaryotic/mitochondrial release factor family. Methylated by PrmC. Methylation increases the termination efficiency of RF1.

The protein resides in the cytoplasm. Its function is as follows. Peptide chain release factor 1 directs the termination of translation in response to the peptide chain termination codons UAG and UAA. This is Peptide chain release factor 1 from Listeria monocytogenes serovar 1/2a (strain ATCC BAA-679 / EGD-e).